A 178-amino-acid polypeptide reads, in one-letter code: ATP synthase subunit delta (178 aa).

Belongs to the ATPase delta chain family. As to quaternary structure, F-type ATPases have 2 components, F(1) - the catalytic core - and F(0) - the membrane proton channel. F(1) has five subunits: alpha(3), beta(3), gamma(1), delta(1), epsilon(1). F(0) has three main subunits: a(1), b(2) and c(10-14). The alpha and beta chains form an alternating ring which encloses part of the gamma chain. F(1) is attached to F(0) by a central stalk formed by the gamma and epsilon chains, while a peripheral stalk is formed by the delta and b chains.

It localises to the cell membrane. In terms of biological role, f(1)F(0) ATP synthase produces ATP from ADP in the presence of a proton or sodium gradient. F-type ATPases consist of two structural domains, F(1) containing the extramembraneous catalytic core and F(0) containing the membrane proton channel, linked together by a central stalk and a peripheral stalk. During catalysis, ATP synthesis in the catalytic domain of F(1) is coupled via a rotary mechanism of the central stalk subunits to proton translocation. This protein is part of the stalk that links CF(0) to CF(1). It either transmits conformational changes from CF(0) to CF(1) or is implicated in proton conduction. The chain is ATP synthase subunit delta from Streptococcus thermophilus (strain ATCC BAA-250 / LMG 18311).